The following is a 364-amino-acid chain: MAMPRYLTEPAFRHDYAPKTGVLLINLGTPDAPTAQALRPYLKQFLSDPRVIEIPRLPWWLILNGIILNTRPKQSAKKYASIWTKEGSPLLLHTRSQAKLLKGQLGEMGLHNLAVDYAMRYGNPSIESVIGKMREQGVERLLLLPLYPQYAASSSATALDEAFRVLSRLRNMPEVRTVRHFHDDPGYIAALAAQIRKHWQYGQRPDKLVMSFHGVPRFTRDKGDPYHCECQKTGRLLAEALQLRPDQYVISFQSRFGRTEWLKPYTSEVLEALGKAKTARVDVVCPGFVGDCLETLEEIAMEGKETFLSHGGGEFRYIPCLNEDPQWISSLAGIVRNNLAGWTEIRAEDSQQRAALAHDMGASA.

Positions 213 and 294 each coordinate Fe cation.

The protein belongs to the ferrochelatase family.

It is found in the cytoplasm. The catalysed reaction is heme b + 2 H(+) = protoporphyrin IX + Fe(2+). Its pathway is porphyrin-containing compound metabolism; protoheme biosynthesis; protoheme from protoporphyrin-IX: step 1/1. Functionally, catalyzes the ferrous insertion into protoporphyrin IX. In Chromobacterium violaceum (strain ATCC 12472 / DSM 30191 / JCM 1249 / CCUG 213 / NBRC 12614 / NCIMB 9131 / NCTC 9757 / MK), this protein is Ferrochelatase.